Consider the following 879-residue polypeptide: MNEQYSAMRSNVSMLGTLLGDTIKEALGENILDKVETIRKLSKSSRAGNEKHRQELLTTLQNLSNDELLPVARAFSQFLNLTNTAEQYHTISPHGEAASNPAQLSSAFKRLKESKDLSERDIRDAVESLSIELVLTAHPTEITRRTLIHKLVEVNTCLKQLDHNDLADYERNQVMRRLRQLIAQSWHTDEIRKIRPTPVDEAKWGFAVVENSLWEGVPAFLRELDEQLEQAFGYRLPVDAVPVRFTSWMGGDRDGNPNVTAEVTRHVLLLSRWKAADLFLRDIQVLVSELSMSECTPELLELAGGSEVQEPYRAIMKSLRSQLSCTLSYLEARLTGEERLPPKDLLITNEQLWEPLHACYQSLKTCGMGIIADGSLLDTLRRVRCFGVPLVRIDVRQESTRHTDALAEITRYLGLGDYESWSESDKQAFLIRELSSKRPLLPRYWEPSADTKEVLDTCRVIAKAPQGSIAAYVISMARTPSDVLAVQLLLKEAGCPFALPVAPLFETLDDLNNADDVMTQLLSIDWYRGFIQGKQMVMIGYSDSAKDAGVMAASWAQYRAQDALIKTCEKAGIALTLFHGRGGSIGRGGAPAHAALLSQPPGSLKGGLRVTEQGEMIRFKYGLPDVTISSLALYTGAILEANLLPPPEPKQEWHEVMDELSRVSCDMYRGYVRENPDFVPYFRAATPELELGKLPLGSRPAKRRPNGGVESLRAIPWIFAWTQNRLMLPAWLGAGAGLQKVVDDGKQEQLEEMCRNWPFFSTRIGMLEMVFAKADLWLAEYYDQRLVEEKLWPLGKQLRDQLAADINIVLAISNDDHLMADLPWIAESIALRNVYTDPLNVLQAELLHRSRQQKQPDADLELALMVTIAGVAAGMRNTG.

Catalysis depends on residues histidine 138 and lysine 546.

It belongs to the PEPCase type 1 family. Requires Mg(2+) as cofactor.

The catalysed reaction is oxaloacetate + phosphate = phosphoenolpyruvate + hydrogencarbonate. Functionally, forms oxaloacetate, a four-carbon dicarboxylic acid source for the tricarboxylic acid cycle. The sequence is that of Phosphoenolpyruvate carboxylase from Pectobacterium atrosepticum (strain SCRI 1043 / ATCC BAA-672) (Erwinia carotovora subsp. atroseptica).